The chain runs to 274 residues: Undecaprenyl-diphosphatase 2 (274 aa).

6 consecutive transmembrane segments (helical) span residues 47–64 (VFVI…CWEY), 82–102 (WKFV…GLTF), 110–130 (LFSP…ILWA), 185–205 (ATEF…LYDL), 219–239 (LMAV…RGLI), and 249–269 (VFAW…WSGL).

This sequence belongs to the UppP family.

Its subcellular location is the cell inner membrane. The enzyme catalyses di-trans,octa-cis-undecaprenyl diphosphate + H2O = di-trans,octa-cis-undecaprenyl phosphate + phosphate + H(+). In terms of biological role, catalyzes the dephosphorylation of undecaprenyl diphosphate (UPP). Confers resistance to bacitracin. The protein is Undecaprenyl-diphosphatase 2 of Rhodospirillum rubrum (strain ATCC 11170 / ATH 1.1.1 / DSM 467 / LMG 4362 / NCIMB 8255 / S1).